The sequence spans 155 residues: 6,7-dimethyl-8-ribityllumazine synthase (155 aa).

Residues F23, 57–59 (AFE), and 81–83 (AVI) contribute to the 5-amino-6-(D-ribitylamino)uracil site. 86–87 (ST) serves as a coordination point for (2S)-2-hydroxy-3-oxobutyl phosphate. H89 acts as the Proton donor in catalysis. F114 is a 5-amino-6-(D-ribitylamino)uracil binding site. R128 contributes to the (2S)-2-hydroxy-3-oxobutyl phosphate binding site.

It belongs to the DMRL synthase family.

The enzyme catalyses (2S)-2-hydroxy-3-oxobutyl phosphate + 5-amino-6-(D-ribitylamino)uracil = 6,7-dimethyl-8-(1-D-ribityl)lumazine + phosphate + 2 H2O + H(+). The protein operates within cofactor biosynthesis; riboflavin biosynthesis; riboflavin from 2-hydroxy-3-oxobutyl phosphate and 5-amino-6-(D-ribitylamino)uracil: step 1/2. Catalyzes the formation of 6,7-dimethyl-8-ribityllumazine by condensation of 5-amino-6-(D-ribitylamino)uracil with 3,4-dihydroxy-2-butanone 4-phosphate. This is the penultimate step in the biosynthesis of riboflavin. The sequence is that of 6,7-dimethyl-8-ribityllumazine synthase from Desulfatibacillum aliphaticivorans.